The primary structure comprises 99 residues: UPF0473 protein Athe_1150 (99 aa).

It belongs to the UPF0473 family.

The sequence is that of UPF0473 protein Athe_1150 from Caldicellulosiruptor bescii (strain ATCC BAA-1888 / DSM 6725 / KCTC 15123 / Z-1320) (Anaerocellum thermophilum).